The chain runs to 279 residues: MARVENMTERYAVFGNPIGHSKSPKIHTMFAKETGQSLSYEAILAPIDAFEASFKEFAANEGYGANVTVPFKEQAFSLCDELSEQAQLAGAVNTLSVLADGKIRGDNTDGLGLVADLKRNLGDLCGLQVLLIGAGGAARGSVLPLLHSGIAKLTIVNRTQAKAEALVEIFTSYGDVTSLPITHVGQSYDVIINSTSSSLSGEVPNISPDTIAPHTVCYDMMYGKQSTAFNLWAKSLGAGQTIDGLGMLVGQAAASFSIWRKVTPSVEPVLAQLRSELIG.

Residues 21–23 (SKS) and Thr68 contribute to the shikimate site. Lys72 (proton acceptor) is an active-site residue. Position 84 (Glu84) interacts with NADP(+). Shikimate is bound by residues Asn93 and Asp109. NADP(+) contacts are provided by residues 133 to 137 (GAGGA), 157 to 162 (NRTQAK), and Met220. Tyr222 serves as a coordination point for shikimate. Residue Gly244 coordinates NADP(+).

It belongs to the shikimate dehydrogenase family. In terms of assembly, homodimer.

The enzyme catalyses shikimate + NADP(+) = 3-dehydroshikimate + NADPH + H(+). It functions in the pathway metabolic intermediate biosynthesis; chorismate biosynthesis; chorismate from D-erythrose 4-phosphate and phosphoenolpyruvate: step 4/7. Its function is as follows. Involved in the biosynthesis of the chorismate, which leads to the biosynthesis of aromatic amino acids. Catalyzes the reversible NADPH linked reduction of 3-dehydroshikimate (DHSA) to yield shikimate (SA). This is Shikimate dehydrogenase (NADP(+)) from Shewanella halifaxensis (strain HAW-EB4).